The sequence spans 128 residues: Large ribosomal subunit protein bL20 (128 aa).

This sequence belongs to the bacterial ribosomal protein bL20 family.

Binds directly to 23S ribosomal RNA and is necessary for the in vitro assembly process of the 50S ribosomal subunit. It is not involved in the protein synthesizing functions of that subunit. This Anaplasma marginale (strain Florida) protein is Large ribosomal subunit protein bL20.